The primary structure comprises 278 residues: Sulfur carrier protein FdhD (278 aa).

The Cysteine persulfide intermediate role is filled by C120.

It belongs to the FdhD family.

The protein localises to the cytoplasm. Functionally, required for formate dehydrogenase (FDH) activity. Acts as a sulfur carrier protein that transfers sulfur from IscS to the molybdenum cofactor prior to its insertion into FDH. This is Sulfur carrier protein FdhD from Bordetella petrii (strain ATCC BAA-461 / DSM 12804 / CCUG 43448).